Reading from the N-terminus, the 862-residue chain is Transcription factor E2F7 (862 aa).

2 DNA-binding regions span residues 140-209 and 279-364; these read RKQK…CWHG and RKDK…KWIG. Disordered regions lie at residues 561 to 592, 617 to 643, and 788 to 862; these read PGSD…DAPL, TPEQ…NVGE, and KADS…SAGN. Residues 564–574 show a composition bias toward polar residues; that stretch reads DSPTLEETTMS. Residues 575-590 show a composition bias toward basic and acidic residues; it reads KQERPTKRQLNDKDDA. Polar residues-rich tracts occupy residues 633-643 and 832-851; these read EPVTKHSNVGE and DVSS…SSAQ.

It belongs to the E2F/DP family. As to quaternary structure, homodimer and heterodimer: mainly forms homodimers and, to a lesser extent, heterodimers with e2f8.

The protein resides in the nucleus. Functionally, atypical E2F transcription factor that participates in various processes such as angiogenesis and polyploidization of specialized cells. Mainly acts as a transcription repressor that binds DNA independently of DP proteins and specifically recognizes the E2 recognition site 5'-TTTC[CG]CGC-3'. Directly represses transcription of classical E2F transcription factors such as e2f1. Acts as a regulator of S-phase by recognizing and binding the E2-related site 5'-TTCCCGCC-3' and mediating repression of G1/S-regulated genes. Acts as a promoter of sprouting angiogenesis, possibly by acting as a transcription activator. In Xenopus tropicalis (Western clawed frog), this protein is Transcription factor E2F7 (e2f7).